We begin with the raw amino-acid sequence, 212 residues long: GTP-binding nuclear protein Ran (212 aa).

The Small GTPase Ran-type domain occupies glutamate 3 to asparagine 167. Residue aspartate 14 to threonine 21 participates in GTP binding. A switch-I region spans residues proline 33 to valine 41. Residues glycine 64, asparagine 118–aspartate 121, and serine 146–lysine 148 contribute to the GTP site. A switch-II region spans residues glycine 64–asparagine 80.

This sequence belongs to the small GTPase superfamily. Ran family. Found in a nuclear export complex with RanGTP, exportin and pre-miRNA.

The protein resides in the nucleus. In terms of biological role, GTP-binding protein involved in nucleocytoplasmic transport. Required for the import of protein into the nucleus and also for RNA export. Involved in chromatin condensation and control of cell cycle. This chain is GTP-binding nuclear protein Ran (ranA), found in Dictyostelium discoideum (Social amoeba).